The chain runs to 205 residues: MATPLGWSQGGSGSVCLAFDQLRDVIESQEELIHQLRNVMVLQDENFVSKEEFQEVEKKLVDEKAAHAKTKALLAKEEEKLQFALGEVEVLSKQLEKEKMAFEKALSSVKSRVLQESSKKDQLITKCNEIESHIIKQEDILNGKENEIKELQQVISQQRQSFRNHMSDFRIQKQQETYMAQVLDQKHKKTSGTRRARSRQCSREK.

Residues 17–166 adopt a coiled-coil conformation; it reads LAFDQLRDVI…QQRQSFRNHM (150 aa). A required for interaction with CBX5 and TBPL1 region spans residues 138 to 185; the sequence is EDILNGKENEIKELQQVISQQRQSFRNHMSDFRIQKQQETYMAQVLDQ. The interval 182-205 is disordered; that stretch reads VLDQKHKKTSGTRRARSRQCSREK. Basic residues predominate over residues 186-205; that stretch reads KHKKTSGTRRARSRQCSREK.

The protein belongs to the SPATA24 family. In terms of assembly, homodimer. Interacts with CBX3, CBX5, GMNN, GTF2B, TBPL1 and the polycomb proteins PHCF2, RNF2 and SCMH1 but not with CBX1 or PCGF2. In terms of tissue distribution, highly expressed in the testis and is mainly localized in the spermatids. Also expressed in the lung, heart, spleen and epididymis.

The protein resides in the cytoplasm. It is found in the nucleus. It localises to the nucleolus. The protein localises to the nucleoplasm. Functionally, binds DNA with high affinity but does not bind to TATA boxes. Synergises with GMNN and TBP in activation of TATA box-containing promoters and with GMNN and TBPL1 in activation of the NF1 TATA-less promoter. May play a role in cytoplasm movement and removal during spermiogenesis. This chain is Spermatogenesis-associated protein 24 (Spata24), found in Rattus norvegicus (Rat).